The chain runs to 1183 residues: Protein deacetylase HDAC6 (1183 aa).

The segment at 1-61 is disordered; sequence MTSTGQDSST…KGKMKKLSQP (61 aa). Positions 18-29 are enriched in polar residues; it reads NPQSPLQDSSAT. Phosphoserine is present on serine 21. Residue arginine 32 is modified to Omega-N-methylarginine. Positions 66–75 match the Nuclear export signal motif; the sequence is LIVGLQGLDL. Histone deacetylase regions lie at residues 86–434 and 512–830; these read GLVF…TLLG and GLVY…SLLG. Histidine 215 (1) is an active-site residue. The 2 role is filled by histidine 641. The segment at 972–1042 is disordered; sequence ATENSANQTT…EAQEVQESEE (71 aa). The span at 980–996 shows a compositional bias: low complexity; sequence TTSGEEASGETESFGTS. Residues threonine 990, threonine 995, and threonine 1005 each carry the phosphothreonine modification. Residues 997 to 1008 show a composition bias toward polar residues; the sequence is PSSNASKQTTGA. Serine 1009 bears the Phosphoserine mark. A compositionally biased stretch (low complexity) spans 1021–1035; it reads ELGLSSTLELSSEAQ. Residues 1079–1177 form a UBP-type zinc finger; it reads SWCPHLMAVC…NAAHQNKFGE (99 aa). Cysteine 1081, histidine 1083, cysteine 1101, cysteine 1104, cysteine 1113, cysteine 1116, and cysteine 1121 together coordinate Zn(2+). The segment at 1122–1124 is ubiquitin binding; sequence SRY. Residues histidine 1128, histidine 1132, histidine 1138, cysteine 1151, and cysteine 1154 each contribute to the Zn(2+) site. The ubiquitin binding stretch occupies residues 1150-1157; it reads WCYLCQAY.

Belongs to the histone deacetylase family. HD type 2 subfamily. In terms of assembly, forms a trimeric complex in the nucleus consisting of BANP, HDAC6 and KHDRBS1/SAM68; HDAC6 keeps KHDRBS1 in a deacetylated state which inhibits the inclusion of CD44 alternate exons. The complex is disrupted by MAPK1/MAPK3-mediated phosphorylation of BANP which results in BANP export to the cytoplasm. This facilitates acetylation of KHDRBS1 and CD44 variant exon inclusion. Interacts with SIRT2 (via both phosphorylated, unphosphorylated, active or inactive forms); the interaction is necessary for the complex to interact with alpha-tubulin. Under proteasome impairment conditions, interacts with UBD via its histone deacetylase 1 and UBP-type zinc-finger regions. Interacts with BBIP1, CBFA2T3, CYLD, DDIT3/CHOP, ZMYND15, F-actin and HDAC11. Interacts with RIPOR2; this interaction occurs during early myogenic differentiation and prevents HDAC6 to deacetylate tubulin. Interacts with AURKA; AURKA-mediated phosphorylation of HDAC6 promotes deacetylation of alpha-tubulin. Interacts with DYSF; this interaction occurs during early myogenic differentiation. Interacts with TPPP; inhibiting the tubulin deacetylase activity of HDAC6. Interacts with DYNLL1. Interacts with ATP13A2; the interaction results in recruitment of HDAC6 to lysosomes to promote CTTN deacetylation. Interacts with CCDC141 (via the N-terminal region); inhibiting the deacetylase activity of HDAC6. Interacts with IPO7; the interaction facilitates HDAC6 nuclear translocation in dental papilla cells. The cofactor is Zn(2+). In terms of processing, phosphorylated by AURKA; phosphorylation increases HDAC6-mediated deacetylation of alpha-tubulin and subsequent disassembly of cilia. Post-translationally, ubiquitinated. Its polyubiquitination however does not lead to its degradation. Sumoylated in vitro.

It localises to the cytoplasm. Its subcellular location is the cytoskeleton. It is found in the nucleus. The protein resides in the perikaryon. The protein localises to the cell projection. It localises to the dendrite. Its subcellular location is the axon. It is found in the cilium. The protein resides in the microtubule organizing center. The protein localises to the centrosome. It localises to the cilium basal body. It carries out the reaction N(6)-acetyl-L-lysyl-[protein] + H2O = L-lysyl-[protein] + acetate. It catalyses the reaction N(6)-acetyl-L-lysyl-[alpha-tubulin] + H2O = L-lysyl-[alpha-tubulin] + acetate. It functions in the pathway protein modification; protein ubiquitination. Deacetylates a wide range of non-histone substrates. Plays a central role in microtubule-dependent cell motility by mediating deacetylation of tubulin. Required for cilia disassembly via deacetylation of alpha-tubulin. Alpha-tubulin deacetylation results in destabilization of dynamic microtubules. Promotes deacetylation of CTTN, leading to actin polymerization, promotion of autophagosome-lysosome fusion and completion of autophagy. Deacetylates SQSTM1. Deacetylates peroxiredoxins PRDX1 and PRDX2, decreasing their reducing activity. Deacetylates antiviral protein RIGI in the presence of viral mRNAs which is required for viral RNA detection by RIGI. Sequentially deacetylates and polyubiquitinates DNA mismatch repair protein MSH2 which leads to MSH2 degradation, reducing cellular sensitivity to DNA-damaging agents and decreasing cellular DNA mismatch repair activities. Deacetylates DNA mismatch repair protein MLH1 which prevents recruitment of the MutL alpha complex (formed by the MLH1-PMS2 heterodimer) to the MutS alpha complex (formed by the MSH2-MSH6 heterodimer), leading to tolerance of DNA damage. Deacetylates RHOT1/MIRO1 which blocks mitochondrial transport and mediates axon growth inhibition. Deacetylates transcription factor SP1 which leads to increased expression of ENG, positively regulating angiogenesis. Deacetylates KHDRBS1/SAM68 which regulates alternative splicing by inhibiting the inclusion of CD44 alternate exons. Promotes odontoblast differentiation following IPO7-mediated nuclear import and subsequent repression of RUNX2 expression. In addition to its protein deacetylase activity, plays a key role in the degradation of misfolded proteins: when misfolded proteins are too abundant to be degraded by the chaperone refolding system and the ubiquitin-proteasome, mediates the transport of misfolded proteins to a cytoplasmic juxtanuclear structure called aggresome. Probably acts as an adapter that recognizes polyubiquitinated misfolded proteins and targets them to the aggresome, facilitating their clearance by autophagy. This is Protein deacetylase HDAC6 from Rattus norvegicus (Rat).